The chain runs to 270 residues: Tryptophan synthase alpha chain (270 aa).

Residues glutamate 49 and aspartate 60 each act as proton acceptor in the active site.

The protein belongs to the TrpA family. Tetramer of two alpha and two beta chains.

It carries out the reaction (1S,2R)-1-C-(indol-3-yl)glycerol 3-phosphate + L-serine = D-glyceraldehyde 3-phosphate + L-tryptophan + H2O. It functions in the pathway amino-acid biosynthesis; L-tryptophan biosynthesis; L-tryptophan from chorismate: step 5/5. Functionally, the alpha subunit is responsible for the aldol cleavage of indoleglycerol phosphate to indole and glyceraldehyde 3-phosphate. The sequence is that of Tryptophan synthase alpha chain from Buchnera aphidicola subsp. Melaphis rhois.